Reading from the N-terminus, the 147-residue chain is UPF0306 protein KPK_0562 (147 aa).

Belongs to the UPF0306 family.

The polypeptide is UPF0306 protein KPK_0562 (Klebsiella pneumoniae (strain 342)).